A 181-amino-acid polypeptide reads, in one-letter code: 3-hydroxyacyl-[acyl-carrier-protein] dehydratase FabZ (181 aa).

Residue His-54 is part of the active site.

This sequence belongs to the thioester dehydratase family. FabZ subfamily.

It localises to the cytoplasm. The enzyme catalyses a (3R)-hydroxyacyl-[ACP] = a (2E)-enoyl-[ACP] + H2O. In terms of biological role, involved in unsaturated fatty acids biosynthesis. Catalyzes the dehydration of short chain beta-hydroxyacyl-ACPs and long chain saturated and unsaturated beta-hydroxyacyl-ACPs. The chain is 3-hydroxyacyl-[acyl-carrier-protein] dehydratase FabZ from Yersinia pestis.